Consider the following 347-residue polypeptide: Phosphate acyltransferase (347 aa).

The protein belongs to the PlsX family. Homodimer. Probably interacts with PlsY.

It is found in the cytoplasm. The enzyme catalyses a fatty acyl-[ACP] + phosphate = an acyl phosphate + holo-[ACP]. Its pathway is lipid metabolism; phospholipid metabolism. Functionally, catalyzes the reversible formation of acyl-phosphate (acyl-PO(4)) from acyl-[acyl-carrier-protein] (acyl-ACP). This enzyme utilizes acyl-ACP as fatty acyl donor, but not acyl-CoA. The polypeptide is Phosphate acyltransferase (Sinorhizobium fredii (strain NBRC 101917 / NGR234)).